A 212-amino-acid polypeptide reads, in one-letter code: RING-H2 finger protein ATL68 (212 aa).

The chain crosses the membrane as a helical span at residues 24-44; the sequence is LGLGYSIAIALGFLVLISTII. Residues 136–178 form an RING-type; atypical zinc finger; sequence CSICLCEYMEEEMLRMMPECKHYFHVYCLDAWLKLNGSCPVCR. The disordered stretch occupies residues 182–212; the sequence is LPTPQSTPQSTPLSEVVPLSQYAADRRRSRR. Residues 185–195 show a composition bias toward low complexity; that stretch reads PQSTPQSTPLS.

It belongs to the RING-type zinc finger family. ATL subfamily.

It is found in the membrane. The enzyme catalyses S-ubiquitinyl-[E2 ubiquitin-conjugating enzyme]-L-cysteine + [acceptor protein]-L-lysine = [E2 ubiquitin-conjugating enzyme]-L-cysteine + N(6)-ubiquitinyl-[acceptor protein]-L-lysine.. It functions in the pathway protein modification; protein ubiquitination. The protein is RING-H2 finger protein ATL68 (ATL68) of Arabidopsis thaliana (Mouse-ear cress).